Consider the following 357-residue polypeptide: MRLGTFHKKKRFYINKIKINFLSFLFRNKINNQITDPAQVKSCLIIHDNNKLGDLIVLSSIYRELYSKGVKITLLTNRKGGEFLSNNKNIFEFCIKESTGFLEMLTLCKHLRDLQFDIVLDPFETMPSFKHSLILSSLKDSYILGFDHWYKRYYSFYHPHDECLKEHMSTRAIEILKHIYGEGKFSTNYDLHLPVDVEDKIKEFIGDTRIVIINPLGAKKICRLTFEQIKVIYQEVKTHFENYRIIFTGLPQDLLTIPILEIETLPFDEFIYTVALTKYSDFVISVDTALVHIAAAYHKPTLAFYPNSRTPEYPSHLIWSPNHHKSIQIVSPTYTVKDIDTETLTNSVKRLSCIDKK.

The enzyme catalyses alpha-D-Glc-(1-&gt;2)-alpha-D-Glc-(1-&gt;3)-[alpha-D-Gal-(1-&gt;6)]-alpha-D-Glc-(1-&gt;3)-[L-alpha-D-Hep-(1-&gt;7)]-4-O-PO3(2-)-L-alpha-D-Hep-(1-&gt;3)-4-O-PO3(2-)-L-alpha-D-Hep-(1-&gt;5)-[alpha-Kdo-(2-&gt;4)]-alpha-Kdo-(2-&gt;6)-lipid A + ADP-L-glycero-beta-D-manno-heptose = lipid A-core + ADP + H(+). Its pathway is bacterial outer membrane biogenesis; LPS core biosynthesis. Transferase involved in the biosynthesis of the core oligosaccharide region of lipopolysaccharide (LPS). May catalyze the addition of the terminal heptose (heptose IV) to the outer-core glucose III, the last step of the lipid A-core oligosaccharide biosynthesis. This chain is Putative lipopolysaccharide heptosyltransferase 4, found in Escherichia coli (strain K12).